Consider the following 88-residue polypeptide: Otospiralin (88 aa).

Residues 1–21 (MQACMVPGLALCLLLGSLTEA) form the signal peptide.

The protein belongs to the otospiralin family. As to expression, ear specific.

The protein resides in the secreted. Functionally, may be essential for the survival of the neurosensory epithelium of the inner ear. The polypeptide is Otospiralin (OTOS) (Cavia porcellus (Guinea pig)).